A 435-amino-acid polypeptide reads, in one-letter code: Putative BTB/POZ domain-containing protein L275 (435 aa).

A BTB domain is found at tyrosine 80–asparagine 149.

Belongs to the mimivirus BTB/WD family.

This is Putative BTB/POZ domain-containing protein L275 from Acanthamoeba polyphaga mimivirus (APMV).